The following is a 68-amino-acid chain: Large ribosomal subunit protein bL35 (68 aa).

It belongs to the bacterial ribosomal protein bL35 family.

This chain is Large ribosomal subunit protein bL35, found in Rickettsia felis (strain ATCC VR-1525 / URRWXCal2) (Rickettsia azadi).